Consider the following 189-residue polypeptide: Peptidyl-tRNA hydrolase (189 aa).

Tyr15 serves as a coordination point for tRNA. Catalysis depends on His20, which acts as the Proton acceptor. Residues Phe64 and Asn66 each contribute to the tRNA site.

Belongs to the PTH family. Monomer.

It is found in the cytoplasm. The catalysed reaction is an N-acyl-L-alpha-aminoacyl-tRNA + H2O = an N-acyl-L-amino acid + a tRNA + H(+). Its function is as follows. Hydrolyzes ribosome-free peptidyl-tRNAs (with 1 or more amino acids incorporated), which drop off the ribosome during protein synthesis, or as a result of ribosome stalling. Catalyzes the release of premature peptidyl moieties from peptidyl-tRNA molecules trapped in stalled 50S ribosomal subunits, and thus maintains levels of free tRNAs and 50S ribosomes. The protein is Peptidyl-tRNA hydrolase of Persephonella marina (strain DSM 14350 / EX-H1).